A 498-amino-acid polypeptide reads, in one-letter code: MRINPTTSSPGVPALEKKNLGRIAQIIGPVLDVAFPPGKMPNIYNALVVKGRDTVGQQINVTCEVQQLLGNNRVRAVAMSATDGLMRGMEVIDTGAPLSVPVGGATLGRIFNVLGEPIDNLGPVDTRTTSPIHRSAPAFIQLDTKLSIFETGIKVVDLLAPYRRGGKIGLFGGAGVGKTVLIMELINNIAKAHGGVSVFGGVGERTREGNDLYMEMKESGVINEQNIAESKVALVYGQMNEPPGARMRVGLTALTMAEYFRDVNEQDVLLFIDNIFRFVQAGSEVSALLGRMPSAVGYQPTLSTEMGSLQERITSTKEGSITSIQAVYVPADDLTDPAPATTFAHLDATTVLSRGLAAKGIYPAVDPLDSTSTMLQPRIVGEEHYETAQRVRQTLQRYKELQDIIAILGLDELSEEDRLTVARARKIERFLSQPFFVAEVFTGSPGKYVGLAETIRGFKLILSGELDGLPEQAFYLVGNIDEATAKAMNLEMENKLKK.

172–179 lines the ATP pocket; that stretch reads GGAGVGKT.

The protein belongs to the ATPase alpha/beta chains family. As to quaternary structure, F-type ATPases have 2 components, CF(1) - the catalytic core - and CF(0) - the membrane proton channel. CF(1) has five subunits: alpha(3), beta(3), gamma(1), delta(1), epsilon(1). CF(0) has four main subunits: a(1), b(1), b'(1) and c(9-12).

It is found in the plastid. The protein resides in the chloroplast thylakoid membrane. It catalyses the reaction ATP + H2O + 4 H(+)(in) = ADP + phosphate + 5 H(+)(out). Functionally, produces ATP from ADP in the presence of a proton gradient across the membrane. The catalytic sites are hosted primarily by the beta subunits. This chain is ATP synthase subunit beta, chloroplastic, found in Morus indica (Mulberry).